Here is a 487-residue protein sequence, read N- to C-terminus: Glutamyl-tRNA(Gln) amidotransferase subunit A (487 aa).

Active-site charge relay system residues include K79 and S158. S182 acts as the Acyl-ester intermediate in catalysis.

This sequence belongs to the amidase family. GatA subfamily. As to quaternary structure, heterotrimer of A, B and C subunits.

It carries out the reaction L-glutamyl-tRNA(Gln) + L-glutamine + ATP + H2O = L-glutaminyl-tRNA(Gln) + L-glutamate + ADP + phosphate + H(+). Allows the formation of correctly charged Gln-tRNA(Gln) through the transamidation of misacylated Glu-tRNA(Gln) in organisms which lack glutaminyl-tRNA synthetase. The reaction takes place in the presence of glutamine and ATP through an activated gamma-phospho-Glu-tRNA(Gln). In Ehrlichia canis (strain Jake), this protein is Glutamyl-tRNA(Gln) amidotransferase subunit A.